The chain runs to 241 residues: 1-(5-phosphoribosyl)-5-[(5-phosphoribosylamino)methylideneamino] imidazole-4-carboxamide isomerase (241 aa).

D8 acts as the Proton acceptor in catalysis. The Proton donor role is filled by D130.

It belongs to the HisA/HisF family.

It localises to the cytoplasm. The catalysed reaction is 1-(5-phospho-beta-D-ribosyl)-5-[(5-phospho-beta-D-ribosylamino)methylideneamino]imidazole-4-carboxamide = 5-[(5-phospho-1-deoxy-D-ribulos-1-ylimino)methylamino]-1-(5-phospho-beta-D-ribosyl)imidazole-4-carboxamide. The protein operates within amino-acid biosynthesis; L-histidine biosynthesis; L-histidine from 5-phospho-alpha-D-ribose 1-diphosphate: step 4/9. The chain is 1-(5-phosphoribosyl)-5-[(5-phosphoribosylamino)methylideneamino] imidazole-4-carboxamide isomerase from Flavobacterium psychrophilum (strain ATCC 49511 / DSM 21280 / CIP 103535 / JIP02/86).